We begin with the raw amino-acid sequence, 151 residues long: RNA polymerase-binding transcription factor DksA (151 aa).

Residues 33-54 (NEAQLAHFRRILEAWRNQLRDE) are a coiled coil. C114, C117, C135, and C138 together coordinate Zn(2+). The segment at 114–138 (CESCGVEIGIRRLEARPTADLCIDC) adopts a dksA C4-type zinc-finger fold.

The protein belongs to the DksA family. In terms of assembly, interacts directly with the RNA polymerase.

The protein localises to the cytoplasm. Functionally, transcription factor that acts by binding directly to the RNA polymerase (RNAP). Required for negative regulation of rRNA expression and positive regulation of several amino acid biosynthesis promoters. Also required for regulation of fis expression. The sequence is that of RNA polymerase-binding transcription factor DksA from Escherichia coli O157:H7.